A 416-amino-acid polypeptide reads, in one-letter code: Protein-lysine N-trimethyltransferase SMYD5 (416 aa).

One can recognise an SET domain in the interval 21 to 351 (GSVEVRYVDS…PGEEICISYL (331 aa)). The MYND-type zinc finger occupies 98-136 (PELCSVRKDLHQNCPHCQVMYCSAECRLAAAEQYHQILC). Residue Tyr-350 coordinates S-adenosyl-L-methionine. A disordered region spans residues 383 to 416 (EADDPNVTSEEEEEEDEEEGEPEDAELGDEMTDV).

This sequence belongs to the class V-like SAM-binding methyltransferase superfamily. As to quaternary structure, interacts with the N-CoR complex. Interacts with EHMT2 and CBX5. Post-translationally, ubiquitinated and degradaed by the proteasome in response to mild hypothermia (32 degrees Celsius), relieving repression of the SP1 gene.

The protein resides in the cytoplasm. It catalyses the reaction L-lysyl-[protein] + 3 S-adenosyl-L-methionine = N(6),N(6),N(6)-trimethyl-L-lysyl-[protein] + 3 S-adenosyl-L-homocysteine + 3 H(+). The enzyme catalyses L-lysyl(20)-[histone H4] + 3 S-adenosyl-L-methionine = N(6),N(6),N(6)-trimethyl-L-lysyl(20)-[histone H4] + 3 S-adenosyl-L-homocysteine + 3 H(+). The catalysed reaction is L-lysyl(36)-[histone H3] + 3 S-adenosyl-L-methionine = N(6),N(6),N(6)-trimethyl-L-lysyl(36)-[histone H3] + 3 S-adenosyl-L-homocysteine + 3 H(+). Its function is as follows. Protein-lysine N-trimethyltransferase that specifically catalyzes trimethylation of 'Lys-22' of the RPL40/eL40 subunit of the 60S ribosome, thereby promoting translation elongation and protein synthesis. May also act as a histone methyltransferase in the context of histone octamers, but not on nucleosome substrates: trimethylates 'Lys-36' of histone H3 and 'Lys-20' of histone H4 to form H3K36me3 and H4K20me3, respectively. The histone methyltransferase activity, which is independent of its SET domain, is however unsure in vivo. In association with the NCoR corepressor complex, involved in the repression of toll-like receptor 4 (TLR4)-target inflammatory genes in macrophages, possibly by catalyzing the formation of H4K20me3 at the gene promoters. Plays an important role in embryonic stem (ES) cell self-renewal and differentiation. Maintains genome stability of ES cells during differentiation through regulation of heterochromatin formation and repression of endogenous repetitive DNA elements by promoting H4K20me3 marks. Acts as a regulator of the hypothermia response: its degradation in response to mild hypothermia relieves the formation of H3K36me3 at gene promoters, allowing expression of the neuroprotective gene SP1. The protein is Protein-lysine N-trimethyltransferase SMYD5 of Mus musculus (Mouse).